Consider the following 205-residue polypeptide: Glycerol-3-phosphate acyltransferase (205 aa).

6 helical membrane passes run 5-25, 54-74, 87-107, 117-137, 138-158, and 162-182; these read LALGIWAASYLAGSLPAGYLA, GPAAAVLLFDVFKGLFAVWLA, IVLGAGLAAIVGHSWPVWLAF, VGLLLGMHWPVALTVAAVWGV, CFAVTRIVSFASIVAAAATPL, and LWRAPLPFTLFGLLGGIYIVW.

This sequence belongs to the PlsY family. As to quaternary structure, probably interacts with PlsX.

Its subcellular location is the cell inner membrane. It catalyses the reaction an acyl phosphate + sn-glycerol 3-phosphate = a 1-acyl-sn-glycero-3-phosphate + phosphate. The protein operates within lipid metabolism; phospholipid metabolism. Catalyzes the transfer of an acyl group from acyl-phosphate (acyl-PO(4)) to glycerol-3-phosphate (G3P) to form lysophosphatidic acid (LPA). This enzyme utilizes acyl-phosphate as fatty acyl donor, but not acyl-CoA or acyl-ACP. This chain is Glycerol-3-phosphate acyltransferase, found in Gloeobacter violaceus (strain ATCC 29082 / PCC 7421).